The primary structure comprises 118 residues: Thioredoxin H3 (118 aa).

N-acetylalanine is present on alanine 2. The Thioredoxin domain occupies 2–113 (AAEGEVIACH…IIANLEKHKT (112 aa)). Residues cysteine 39 and cysteine 42 each act as nucleophile in the active site. An intrachain disulfide couples cysteine 39 to cysteine 42.

The protein belongs to the thioredoxin family. Plant H-type subfamily. Interacts with FBA5 and FBA8. Interacts with FBA6. Interacts with MDH1.

It is found in the cytoplasm. In terms of biological role, thiol-disulfide oxidoreductase that possesses disulfide reductase and insulin disulfide bonds reducing activities. Heat shock causes oligomerization and formation of high molecular weight (HMW) complexes with concomitant functional switching from a disulfide reductase to chaperone. The chain is Thioredoxin H3 (TRX3) from Arabidopsis thaliana (Mouse-ear cress).